The following is a 99-amino-acid chain: Citrate lyase acyl carrier protein (99 aa).

Ser-14 carries the O-(phosphoribosyl dephospho-coenzyme A)serine modification.

The protein belongs to the CitD family. As to quaternary structure, oligomer with a subunit composition of (alpha,beta,gamma)6.

Its subcellular location is the cytoplasm. Its function is as follows. Covalent carrier of the coenzyme of citrate lyase. This chain is Citrate lyase acyl carrier protein, found in Edwardsiella ictaluri (strain 93-146).